The sequence spans 138 residues: Acidic phospholipase A2 homolog sistruxin A (138 aa).

A signal peptide spans 1-37 (MRALWIVAVLLLGVEGSLVEFETLIMKIAGRSGVWYY). Intrachain disulfides connect cysteine 42-cysteine 131, cysteine 44-cysteine 60, cysteine 59-cysteine 111, cysteine 65-cysteine 138, cysteine 66-cysteine 104, cysteine 73-cysteine 97, and cysteine 91-cysteine 102. Positions 78-83 (DVYTYR) are excised as a propeptide. At glutamine 84 the chain carries Pyrrolidone carboxylic acid. Positions 119 to 124 (YNHKYW) are excised as a propeptide.

It belongs to the phospholipase A2 family. Group II subfamily. D49 sub-subfamily. Heterodimer of an acidic subunit and a basic chain. The acidic subunit is non-toxic, without enzymatic activity and comprises 3 peptides that are cross-linked by 7 disulfide bridges. The basic subunit is toxic, has phospholipase A2 activity and is composed of a single chain. In terms of tissue distribution, expressed by the venom gland.

Its subcellular location is the secreted. In terms of biological role, snake venom phospholipase A2 (PLA2) that inhibits neuromuscular transmission by blocking acetylcholine release from the nerve termini. The chain is Acidic phospholipase A2 homolog sistruxin A from Sistrurus tergeminus (Western massasauga).